A 917-amino-acid polypeptide reads, in one-letter code: Protein translocase subunit SecA (917 aa).

ATP is bound by residues Q87, 105–109 (GEGKT), and D513. A disordered region spans residues 834-917 (EEQMNEMEKR…YKSCHGKLTG (84 aa)). A compositionally biased stretch (basic and acidic residues) spans 839-852 (EMEKRRQEEAERQR). Low complexity predominate over residues 862-876 (APSQLAAPATPATPE). Residues C900, C902, C911, and H912 each coordinate Zn(2+).

The protein belongs to the SecA family. In terms of assembly, monomer and homodimer. Part of the essential Sec protein translocation apparatus which comprises SecA, SecYEG and auxiliary proteins SecDF-YajC and YidC. Zn(2+) is required as a cofactor.

The protein resides in the cell inner membrane. It localises to the cytoplasm. It carries out the reaction ATP + H2O + cellular proteinSide 1 = ADP + phosphate + cellular proteinSide 2.. Its function is as follows. Part of the Sec protein translocase complex. Interacts with the SecYEG preprotein conducting channel. Has a central role in coupling the hydrolysis of ATP to the transfer of proteins into and across the cell membrane, serving both as a receptor for the preprotein-SecB complex and as an ATP-driven molecular motor driving the stepwise translocation of polypeptide chains across the membrane. This Saccharophagus degradans (strain 2-40 / ATCC 43961 / DSM 17024) protein is Protein translocase subunit SecA.